The sequence spans 461 residues: UPF0053 protein YhdT (461 aa).

The CNNM transmembrane domain maps to 1–202 (MDDIDSLILI…LKNGEINPSE (202 aa)). Transmembrane regions (helical) follow at residues 8 to 28 (ILIG…FAIV), 103 to 123 (VSFA…GELA), and 137 to 157 (LLIA…IWIL). CBS domains are found at residues 221 to 280 (MIPR…MTEE) and 290 to 347 (YVRP…IRDE).

The protein belongs to the UPF0053 family.

The protein localises to the cell membrane. The chain is UPF0053 protein YhdT (yhdT) from Bacillus subtilis (strain 168).